The following is a 364-amino-acid chain: Dual-specificity RNA methyltransferase RlmN (364 aa).

E91 (proton acceptor) is an active-site residue. Residues 97–333 (ESDRGTLCIS…VTVRKTRGDD (237 aa)) form the Radical SAM core domain. A disulfide bridge links C104 with C338. C111, C115, and C118 together coordinate [4Fe-4S] cluster. Residues 164–165 (GE), S196, 218–220 (SLH), and N295 each bind S-adenosyl-L-methionine. C338 serves as the catalytic S-methylcysteine intermediate.

Belongs to the radical SAM superfamily. RlmN family. It depends on [4Fe-4S] cluster as a cofactor.

It is found in the cytoplasm. It catalyses the reaction adenosine(2503) in 23S rRNA + 2 reduced [2Fe-2S]-[ferredoxin] + 2 S-adenosyl-L-methionine = 2-methyladenosine(2503) in 23S rRNA + 5'-deoxyadenosine + L-methionine + 2 oxidized [2Fe-2S]-[ferredoxin] + S-adenosyl-L-homocysteine. The enzyme catalyses adenosine(37) in tRNA + 2 reduced [2Fe-2S]-[ferredoxin] + 2 S-adenosyl-L-methionine = 2-methyladenosine(37) in tRNA + 5'-deoxyadenosine + L-methionine + 2 oxidized [2Fe-2S]-[ferredoxin] + S-adenosyl-L-homocysteine. Specifically methylates position 2 of adenine 2503 in 23S rRNA and position 2 of adenine 37 in tRNAs. m2A2503 modification seems to play a crucial role in the proofreading step occurring at the peptidyl transferase center and thus would serve to optimize ribosomal fidelity. This is Dual-specificity RNA methyltransferase RlmN from Neisseria meningitidis serogroup C / serotype 2a (strain ATCC 700532 / DSM 15464 / FAM18).